Reading from the N-terminus, the 254-residue chain is MKLLEGKTVLVTGASTGIGRAAAIGAAQHGADVAINYAHSDGPAQSCVAEIEALGQRAIAVKGDVADPQTAQDFVAKAVETFGKVDVMVSNAGICPFHAFLDMPVDVVERTFKVNLHGAYFMVQAAAQQMVRQGHGGSIVAVSSISALVGGEYQTHYTPTKAGVHSLMQSTAIALGKHGIRCNSVLPGTILTEINKDDLADQEKREYMEARTPLGRLGAPEDLAGPIVFLASDMAAYVTGAALLVDGGMYVNLQ.

Residues Gly13, Ser15, Ile18, Asp64, Val65, and Asn91 each coordinate NADP(+). Residue Ser144 is the Proton donor of the active site. Beta-L-rhamnose contacts are provided by Ser144, Ser146, Gln154, and Tyr157. Tyr157 and Lys161 together coordinate NADP(+). Tyr157 serves as the catalytic Proton acceptor. Lys161 (lowers pKa of active site Tyr) is an active-site residue. Thr189 is a binding site for beta-L-rhamnose. Residue Ile190 participates in NADP(+) binding. Asn195 is a binding site for beta-L-rhamnose.

Belongs to the short-chain dehydrogenases/reductases (SDR) family.

It carries out the reaction L-rhamnofuranose + NAD(+) = L-rhamnono-1,4-lactone + NADH + H(+). The catalysed reaction is L-rhamnofuranose + NADP(+) = L-rhamnono-1,4-lactone + NADPH + H(+). It participates in carbohydrate degradation; L-rhamnose degradation. In terms of biological role, NAD(P)-dependent dehydrogenase that catalyzes the oxidation of L-rhamnose to L-rhamnono-1,4-lactone. Also shows high activity with L-lyxose and low activity with L-mannose. Can utilize either NAD(+) or NADP(+), with a slight preference for NADP(+). Catalyzes the first step in an alternative pathway for rhamnose utilization that does not involve phosphorylated intermediates. This is L-rhamnose 1-dehydrogenase (NAD(P)(+)) from Sphingomonas sp. (strain SKA58).